A 281-amino-acid chain; its full sequence is MSAQESCLSLIKYFLFVFNLFFFVLGGLIFCFGTWILIDKTSFVSFVGLSFVPLQTWSKVLSVSGVLTMALALLGCVGALKELRCLLGLYFGMLLLLFATQITLGILISTQRVRLERRVQELVLRTIQSYRTNPDETAAEESWDYAQFQLRCCGWQSPRDWNKAQMLKANGSEELFVPCSCYNSTATNDSSGFDKLFLSQLSRLGPRAKLRQTADICALPAKAHIYREGCARSLQKWLHNNIISIVGICLGVGLLELGFMTLSIFLCRNLDHVYDRLARYR.

Over 1-17 the chain is Cytoplasmic; that stretch reads MSAQESCLSLIKYFLFV. A helical membrane pass occupies residues 18–38; the sequence is FNLFFFVLGGLIFCFGTWILI. Residues 39–59 are Extracellular-facing; it reads DKTSFVSFVGLSFVPLQTWSK. A helical membrane pass occupies residues 60-74; sequence VLSVSGVLTMALALL. Over 75-85 the chain is Cytoplasmic; that stretch reads GCVGALKELRC. Residues 86–111 form a helical membrane-spanning segment; that stretch reads LLGLYFGMLLLLFATQITLGILISTQ. Residues 112–241 are Extracellular-facing; that stretch reads RVRLERRVQE…RSLQKWLHNN (130 aa). 3 N-linked (GlcNAc...) asparagine glycosylation sites follow: Asn-170, Asn-183, and Asn-188. Residues 242 to 266 form a helical membrane-spanning segment; sequence IISIVGICLGVGLLELGFMTLSIFL. Over 267–281 the chain is Cytoplasmic; sequence CRNLDHVYDRLARYR.

This sequence belongs to the tetraspanin (TM4SF) family. As to quaternary structure, interacts with SCIMP. Interacts with SOCS3. Interacts with DECTIN1/CLEC7A. In terms of processing, tyrosine phosphorylated; leading to activation of downstream signaling pathways. B-lymphocytes.

Its subcellular location is the cell membrane. Its function is as follows. Structural component of specialized membrane microdomains known as tetraspanin-enriched microdomains (TERMs), which act as platforms for receptor clustering and signaling. Participates thereby in diverse biological functions such as cell signal transduction, adhesion, migration and protein trafficking. Upon ligand binding, two signaling pathways are activated, one acting through phosphorylation by LYN leading to cell death or a survival pathway with activation of GSK3B. Plays an essential role essential for clustering of integrin ITGA4/ITGB1 and promotes its mobility in the plasma membrane of B-cells. In turn, participates in ITGA4/ITGB1 integrin-mediated antiapoptotic signaling through AKT. Plays also a role in the migration of dendritic cells and neutrophils to draining lymph nodes, as well as in their integrin-mediated adhesion. Negatively regulates IL-6 responses through direct interaction with SOCS3 thereby preventing constitutive IL-6 signaling. Alternatively, inhibition of IL-6 signaling can also occur via interaction and stabilization of DECTIN1/CLEC7A at the cell membrane to inhibit its ability to promote the production of IL-6. This Rattus norvegicus (Rat) protein is Leukocyte antigen CD37 (Cd37).